Reading from the N-terminus, the 431-residue chain is POU domain, class 2, transcription factor 3 (431 aa).

Disordered regions lie at residues 1 to 39 (MVNL…RNGL), 130 to 180 (LLPQ…EPTD), and 248 to 267 (DAES…YPTL). Residues 176 to 250 (DEPTDLEELE…LLEKWLNDAE (75 aa)) enclose the POU-specific domain. Residues 251–267 (SSPSDPSASTPSSYPTL) show a composition bias toward low complexity. The segment at residues 274–333 (KRKKRTSIETNIRLTLEKRFQDNPKPSSEEISMIAEQLSMEKEVVRVWFCNRRQKEKRIN) is a DNA-binding region (homeobox). 3 stretches are compositionally biased toward low complexity: residues 352-364 (PSGS…VPPV), 374-390 (SSCS…PGSG), and 398-419 (ASQN…NSSG). A disordered region spans residues 352–419 (PSGSLGPLSV…SSSSSFNSSG (68 aa)).

This sequence belongs to the POU transcription factor family. Class-2 subfamily. Interacts (via the POU domain) with POU2AF1 and POU2AF2 in a DNA-dependent manner; this interaction recruits POU2AF2 to chromatin and increases POU2F3 transactivation activity. In terms of tissue distribution, skin, thymus, stomach and testis.

It localises to the nucleus. Functionally, transcription factor that binds to the octamer motif (5'-ATTTGCAT-3'). Regulates cell type-specific differentiation pathways. Involved in the regulation of keratinocytes differentiation. The POU2F3-POU2AF2/POU2AF3 complex drives the expression of tuft-cell-specific genes, a rare chemosensory cells that coordinate immune and neural functions within mucosal epithelial tissues. This is POU domain, class 2, transcription factor 3 (Pou2f3) from Mus musculus (Mouse).